A 339-amino-acid chain; its full sequence is Anthranilate phosphoribosyltransferase (339 aa).

5-phospho-alpha-D-ribose 1-diphosphate is bound by residues G79, 82–83, T87, 89–92, 107–115, and S119; these read GD, NVST, and KHGNRAVSS. G79 contacts anthranilate. S91 contributes to the Mg(2+) binding site. N110 serves as a coordination point for anthranilate. R165 is an anthranilate binding site. Mg(2+) is bound by residues D224 and E225.

This sequence belongs to the anthranilate phosphoribosyltransferase family. As to quaternary structure, homodimer. Mg(2+) is required as a cofactor.

The enzyme catalyses N-(5-phospho-beta-D-ribosyl)anthranilate + diphosphate = 5-phospho-alpha-D-ribose 1-diphosphate + anthranilate. It functions in the pathway amino-acid biosynthesis; L-tryptophan biosynthesis; L-tryptophan from chorismate: step 2/5. In terms of biological role, catalyzes the transfer of the phosphoribosyl group of 5-phosphorylribose-1-pyrophosphate (PRPP) to anthranilate to yield N-(5'-phosphoribosyl)-anthranilate (PRA). The protein is Anthranilate phosphoribosyltransferase of Geobacillus stearothermophilus (Bacillus stearothermophilus).